Here is a 185-residue protein sequence, read N- to C-terminus: Ribosome-recycling factor (185 aa).

It belongs to the RRF family.

It is found in the cytoplasm. Its function is as follows. Responsible for the release of ribosomes from messenger RNA at the termination of protein biosynthesis. May increase the efficiency of translation by recycling ribosomes from one round of translation to another. The protein is Ribosome-recycling factor of Campylobacter fetus subsp. fetus (strain 82-40).